A 334-amino-acid chain; its full sequence is Protein NlpD/LppB homolog (334 aa).

In terms of domain architecture, LysM spans 89 to 133 (IFYIVKSKDTMYSIAKNSGYNYHELSKFNSIKKPYKIIIGQKIWM).

This sequence belongs to the E.coli NlpD/Haemophilus LppB family.

The chain is Protein NlpD/LppB homolog from Buchnera aphidicola subsp. Acyrthosiphon pisum (strain APS) (Acyrthosiphon pisum symbiotic bacterium).